A 439-amino-acid chain; its full sequence is UDP-N-acetylglucosamine--peptide N-acetylglucosaminyltransferase stabilizing protein GtfB (439 aa).

The protein belongs to the GtfB family. As to quaternary structure, interacts with glycosyltransferase GtfA (Gtf2); probably forms a heterotetramer with 2 subunits each of GtfA and GtfB. Part of the accessory SecA2/SecY2 protein translocation apparatus.

Its subcellular location is the cell membrane. The protein operates within protein modification; protein glycosylation. Functionally, required for the polymorphic O-glycosylation of the serine-rich repeat protein Fap1. A stabilizing protein that is part of the accessory SecA2/SecY2 system specifically required to export Fap1, a serine-rich fimbrial adhesin encoded upstream in the same operon. The GtfA-GtfB (Gtf1-Gtf2 in this bacteria) complex adds GlcNAc from UDP-GlcNAc to Fap1, attaching the first sugar residue. Cannot use not UDP-Glc as substrate. Stabilizes the glycosylation activity of GtfA, causing it to partially localize to the cellular membrane where it is more protease resistant. This is UDP-N-acetylglucosamine--peptide N-acetylglucosaminyltransferase stabilizing protein GtfB from Streptococcus parasanguinis.